We begin with the raw amino-acid sequence, 328 residues long: Putative tyrosine-protein kinase C03B1.5 (328 aa).

Residues 25 to 288 (WSPALKIGSG…ALHASSQTYL (264 aa)) enclose the Protein kinase domain. Residues 31-39 (IGSGAFGEV) and Lys62 each bind ATP. Asp155 acts as the Proton acceptor in catalysis.

The protein belongs to the protein kinase superfamily. Tyr protein kinase family.

It catalyses the reaction L-tyrosyl-[protein] + ATP = O-phospho-L-tyrosyl-[protein] + ADP + H(+). The polypeptide is Putative tyrosine-protein kinase C03B1.5 (Caenorhabditis elegans).